Reading from the N-terminus, the 301-residue chain is Protoheme IX farnesyltransferase (301 aa).

A run of 8 helical transmembrane segments spans residues 25–45, 47–67, 97–117, 119–139, 147–167, 173–193, 235–255, and 279–299; these read VTQLAVFCAVIGMFLSTPGMV, WTPLIGGTVGIWLLAGAAFAI, ILLFSAVLGGLGMWTLYTFAN, LTMWLTLATFVGYAVIYTLLL, IVIGGASGAMPPALGWAAVTG, AWILVLIIFVWTPPHFWALAL, FISGMSGVVYLAAAVLLGALF, and IVYLSLLFAALLIDHYARVLI.

It belongs to the UbiA prenyltransferase family. Protoheme IX farnesyltransferase subfamily.

The protein localises to the cell inner membrane. The enzyme catalyses heme b + (2E,6E)-farnesyl diphosphate + H2O = Fe(II)-heme o + diphosphate. It participates in porphyrin-containing compound metabolism; heme O biosynthesis; heme O from protoheme: step 1/1. Its function is as follows. Converts heme B (protoheme IX) to heme O by substitution of the vinyl group on carbon 2 of heme B porphyrin ring with a hydroxyethyl farnesyl side group. This chain is Protoheme IX farnesyltransferase, found in Paraburkholderia xenovorans (strain LB400).